The chain runs to 291 residues: Formamidopyrimidine-DNA glycosylase (291 aa).

Pro2 (schiff-base intermediate with DNA) is an active-site residue. The active-site Proton donor is Glu3. Lys58 functions as the Proton donor; for beta-elimination activity in the catalytic mechanism. His100, Arg123, and Lys166 together coordinate DNA. The FPG-type zinc-finger motif lies at 257–291 (SVYGREGKECLQCGTPIIRILQSGRSSFYCSQCQK). Arg281 functions as the Proton donor; for delta-elimination activity in the catalytic mechanism.

It belongs to the FPG family. In terms of assembly, monomer. Zn(2+) is required as a cofactor.

The enzyme catalyses Hydrolysis of DNA containing ring-opened 7-methylguanine residues, releasing 2,6-diamino-4-hydroxy-5-(N-methyl)formamidopyrimidine.. It carries out the reaction 2'-deoxyribonucleotide-(2'-deoxyribose 5'-phosphate)-2'-deoxyribonucleotide-DNA = a 3'-end 2'-deoxyribonucleotide-(2,3-dehydro-2,3-deoxyribose 5'-phosphate)-DNA + a 5'-end 5'-phospho-2'-deoxyribonucleoside-DNA + H(+). Involved in base excision repair of DNA damaged by oxidation or by mutagenic agents. Acts as a DNA glycosylase that recognizes and removes damaged bases. Has a preference for oxidized purines, such as 7,8-dihydro-8-oxoguanine (8-oxoG). Has AP (apurinic/apyrimidinic) lyase activity and introduces nicks in the DNA strand. Cleaves the DNA backbone by beta-delta elimination to generate a single-strand break at the site of the removed base with both 3'- and 5'-phosphates. The polypeptide is Formamidopyrimidine-DNA glycosylase (Bartonella tribocorum (strain CIP 105476 / IBS 506)).